The following is a 401-amino-acid chain: Probable 2,3-bisphosphoglycerate-independent phosphoglycerate mutase (401 aa).

It belongs to the BPG-independent phosphoglycerate mutase family. A-PGAM subfamily.

The enzyme catalyses (2R)-2-phosphoglycerate = (2R)-3-phosphoglycerate. The protein operates within carbohydrate degradation; glycolysis; pyruvate from D-glyceraldehyde 3-phosphate: step 3/5. Its function is as follows. Catalyzes the interconversion of 2-phosphoglycerate and 3-phosphoglycerate. The sequence is that of Probable 2,3-bisphosphoglycerate-independent phosphoglycerate mutase from Thermotoga sp. (strain RQ2).